Consider the following 145-residue polypeptide: 3-dehydroquinate dehydratase 2 (145 aa).

The active-site Proton acceptor is the tyrosine 22. Residues asparagine 73, histidine 79, and aspartate 86 each coordinate substrate. Histidine 101 acts as the Proton donor in catalysis. Substrate contacts are provided by residues 102–103 (IS) and arginine 112.

Belongs to the type-II 3-dehydroquinase family. Homododecamer.

The catalysed reaction is 3-dehydroquinate = 3-dehydroshikimate + H2O. It participates in metabolic intermediate biosynthesis; chorismate biosynthesis; chorismate from D-erythrose 4-phosphate and phosphoenolpyruvate: step 3/7. Functionally, catalyzes a trans-dehydration via an enolate intermediate. This Corynebacterium efficiens (strain DSM 44549 / YS-314 / AJ 12310 / JCM 11189 / NBRC 100395) protein is 3-dehydroquinate dehydratase 2 (aroQ2).